We begin with the raw amino-acid sequence, 3391 residues long: Genome polyprotein (3391 aa).

The interaction with host EXOC1 stretch occupies residues 1 to 15; that stretch reads MNDQRKEAKNTPFNM. Topologically, residues 1-101 are cytoplasmic; it reads MNDQRKEAKN…LNILNRRRRS (101 aa). A hydrophobic; homodimerization of capsid protein C region spans residues 37–72; that stretch reads MLQGRGPLKLYMALVAFLRFLTIPPTAGILKRWGTI. The propeptide at 101-114 is ER anchor for the Capsid protein C, removed in mature form by serine protease NS3; the sequence is SAGMIIMLIPTVMA. The propeptide at 101–114 is ER anchor for the capsid protein C, removed in mature form by serine protease NS3; the sequence is SAGMIIMLIPTVMA. A helical transmembrane segment spans residues 102–122; sequence AGMIIMLIPTVMAFHLTTRNG. Residues 123–242 are Extracellular-facing; sequence EPHMIVSRQE…HVQRIETWIL (120 aa). N183 carries N-linked (GlcNAc...) asparagine; by host glycosylation. The chain crosses the membrane as a helical span at residues 243-260; that stretch reads RHPGFTMMAAILAYTIGT. Position 261 (T261) is a topological domain, cytoplasmic. A helical transmembrane segment spans residues 262–280; the sequence is HFQRALILILLTAVTPSMT. Residues 281–727 lie on the Extracellular side of the membrane; that stretch reads MRCIGMSNRD…QVFGAIYGAA (447 aa). Disulfide bonds link C283–C310, C340–C401, C354–C385, and C372–C396. An N-linked (GlcNAc...) asparagine; by host glycan is attached at N347. A fusion peptide region spans residues 378–391; that stretch reads DRGWGNGCGLFGKG. An N-linked (GlcNAc...) asparagine; by host glycan is attached at N433. 2 disulfide bridges follow: C465–C565 and C582–C613. The helical transmembrane segment at 728 to 748 threads the bilayer; that stretch reads FSGVSWTMKILIGVIITWIGM. Topologically, residues 749-752 are cytoplasmic; sequence NSRS. Residues 753 to 773 form a helical membrane-spanning segment; the sequence is TSLSVTLVLVGIVTLYLGVMV. At 774-1195 the chain is on the extracellular side; that stretch reads QADSGCVVSW…MVGATMTDDI (422 aa). Cystine bridges form between C779–C790, C830–C918, C954–C998, C1055–C1104, C1066–C1088, and C1087–C1091. N-linked (GlcNAc...) asparagine; by host glycosylation is found at N905 and N982. N1134 is a glycosylation site (N-linked (GlcNAc...) asparagine; by host). Residues 1196–1220 form a helical membrane-spanning segment; that stretch reads GMGVTYLALLAAFKVRPTFAAGLLL. Residues 1221–1226 are Cytoplasmic-facing; that stretch reads RKLTSK. The helical transmembrane segment at 1227 to 1245 threads the bilayer; it reads ELMMTTIGIVLSSQSTIPE. The Lumenal portion of the chain corresponds to 1246 to 1269; sequence TILELTDALALGMMVLKMVRNMEK. A helical transmembrane segment spans residues 1270 to 1290; it reads YQLAVTIMAILCVPNAVILQN. A topological domain (cytoplasmic) is located at residue A1291. Residues 1292-1310 form a helical membrane-spanning segment; sequence WKVSCTILAVVSVSPLFLT. Residues 1311 to 1317 lie on the Lumenal side of the membrane; the sequence is SSQQKTD. The helical transmembrane segment at 1318-1338 threads the bilayer; it reads WIPLALTIKGLNPTAIFLTTL. Residues 1339-1346 are Cytoplasmic-facing; the sequence is SRTSKKRS. A helical transmembrane segment spans residues 1347–1367; that stretch reads WPLNEAIMAVGMVSILASSLL. Residues 1368-1370 are Lumenal-facing; sequence KND. The helical transmembrane segment at 1371–1391 threads the bilayer; that stretch reads IPMTGPLVAGGLLTVCYVLTG. The Cytoplasmic portion of the chain corresponds to 1392-1447; sequence RSADLELERAADVKWEDQAEISGSSPILSITISEDGSMSIKNEEEEQTLTILIRRG. Positions 1398–1437 are interacts with and activates NS3 protease; it reads LERAADVKWEDQAEISGSSPILSITISEDGSMSIKNEEEE. Residues 1448–1468 constitute an intramembrane region (helical); the sequence is LLVISGLFPVSIPITAAAWYL. The Cytoplasmic portion of the chain corresponds to 1469–2147; that stretch reads WEVKKQRAGV…LSELPETLET (679 aa). Positions 1476–1653 constitute a Peptidase S7 domain; it reads AGVLWDVPSP…EKSIEDNPEI (178 aa). Residues H1526, D1550, and S1610 each act as charge relay system; for serine protease NS3 activity in the active site. In terms of domain architecture, Helicase ATP-binding spans 1655–1811; sequence DDIFRKRRLT…QSNAPIIDEE (157 aa). The segment at 1659–1662 is important for RNA-binding; that stretch reads RKRR. 1668–1675 serves as a coordination point for ATP; that stretch reads LHPGAGKT. Positions 1759–1762 match the DEAH box motif; the sequence is DEAH. Positions 1821-1988 constitute a Helicase C-terminal domain; sequence SGHEWVTDFK…IIPSMFEPER (168 aa). Residue K1863 is modified to N6-acetyllysine; by host. The helical transmembrane segment at 2148–2168 threads the bilayer; it reads LLLLTLLATVTGGIFLFLMSA. The Lumenal segment spans residues 2169-2170; the sequence is RG. The segment at residues 2171–2191 is an intramembrane region (helical); sequence IGKMTLGMCCIITASILLWYA. Position 2192 (Q2192) is a topological domain, lumenal. Residues 2193 to 2213 form a helical membrane-spanning segment; that stretch reads IQPHWIAASIILEFFLIVLLI. Topologically, residues 2214–2228 are cytoplasmic; it reads PEPEKQRTPQDNQLT. The helical transmembrane segment at 2229–2249 threads the bilayer; the sequence is YVVIAILTVVAATMANEMGFL. Over 2250–2274 the chain is Lumenal; the sequence is EKTKKDLGLGSIATQQPESNILDID. An intramembrane region (helical) is located at residues 2275-2295; it reads LRPASAWTLYAVATTFVTPML. Residues 2296 to 2316 lie on the Lumenal side of the membrane; that stretch reads RHSIENSSVNVSLTAIANQAT. N-linked (GlcNAc...) asparagine; by host glycans are attached at residues N2301 and N2305. Residues 2317–2337 constitute an intramembrane region (helical); that stretch reads VLMGLGKGWPLSKMDIGVPLL. The Lumenal segment spans residues 2338 to 2347; it reads AIGCYSQVNP. The helical transmembrane segment at 2348–2368 threads the bilayer; that stretch reads TTLTAALFLLVAHYAIIGPAL. Topologically, residues 2369-2413 are cytoplasmic; sequence QAKASREAQKRAAAGIMKNPTVDGITVIDLDPIPYDPKFEKQLGQ. The helical transmembrane segment at 2414–2434 threads the bilayer; sequence VMLLVLCVTQVLMMRTTWALC. The Lumenal portion of the chain corresponds to 2435-2459; sequence EALTLATGPISTLSEGNPGRFWNTT. N2457 carries an N-linked (GlcNAc...) asparagine; by host glycan. The helical transmembrane segment at 2460 to 2480 threads the bilayer; the sequence is IAVSMANIFRGSYLAGAGLLF. Topologically, residues 2481-3391 are cytoplasmic; sequence SIMKNTTNTR…REEEEAGVLW (911 aa). Positions 2493 to 2755 constitute an mRNA cap 0-1 NS5-type MT domain; sequence TGNIGETLGE…DVDLGSGTRN (263 aa). S2547 serves as a coordination point for S-adenosyl-L-methionine. S2547 carries the phosphoserine modification. Catalysis depends on K2552, which acts as the For 2'-O-MTase activity. The short motif at 2568 to 2571 is the SUMO-interacting motif element; the sequence is VVDL. S-adenosyl-L-methionine-binding residues include G2577, W2578, T2595, K2596, D2622, and V2623. Residue D2637 is the For 2'-O-MTase activity of the active site. I2638 provides a ligand contact to S-adenosyl-L-methionine. Catalysis depends on for 2'-O-MTase activity residues K2672 and E2708. Y2710 contacts S-adenosyl-L-methionine. E2929, H2933, C2938, and C2941 together coordinate Zn(2+). Residues 3020–3169 form the RdRp catalytic domain; it reads AMYADDTAGW…PLDDRLPSAL (150 aa). Positions 3203, 3219, and 3338 each coordinate Zn(2+).

This sequence in the N-terminal section; belongs to the class I-like SAM-binding methyltransferase superfamily. mRNA cap 0-1 NS5-type methyltransferase family. As to quaternary structure, homodimer. Interacts (via N-terminus) with host EXOC1 (via C-terminus); this interaction results in EXOC1 degradation through the proteasome degradation pathway. In terms of assembly, forms heterodimers with envelope protein E in the endoplasmic reticulum and Golgi. Homodimer; in the endoplasmic reticulum and Golgi. Interacts with protein prM. Interacts with non-structural protein 1. As to quaternary structure, homodimer; Homohexamer when secreted. Interacts with envelope protein E. Interacts with host PRKAA1. In terms of assembly, interacts (via N-terminus) with serine protease NS3. Forms a heterodimer with serine protease NS3. May form homooligomers. As to quaternary structure, forms a heterodimer with NS2B. Interacts with NS4B. Interacts with unphosphorylated RNA-directed RNA polymerase NS5; this interaction stimulates RNA-directed RNA polymerase NS5 guanylyltransferase activity. Interacts with host SHFL. In terms of assembly, interacts with host MAVS; this interaction inhibits the synthesis of IFN-beta. Interacts with host SHFL. Interacts with host AUP1; the interaction occurs in the presence of Dengue virus NS4B and induces lipophagy which facilitates production of virus progeny particles. May interact with host SRPRA and SEC61G. Interacts with serine protease NS3. As to quaternary structure, homodimer. Interacts with host STAT2; this interaction inhibits the phosphorylation of the latter, and, when all viral proteins are present (polyprotein), targets STAT2 for degradation. Interacts with serine protease NS3. Interacts with host PAF1 complex; the interaction may prevent the recruitment of the PAF1 complex to interferon-responsive genes, and thus reduces the immune response. Specific enzymatic cleavages in vivo yield mature proteins. Cleavages in the lumen of endoplasmic reticulum are performed by host signal peptidase, whereas cleavages in the cytoplasmic side are performed by serine protease NS3. Signal cleavage at the 2K-4B site requires a prior NS3 protease-mediated cleavage at the 4A-2K site. In terms of processing, cleaved in post-Golgi vesicles by a host furin, releasing the mature small envelope protein M, and peptide pr. This cleavage is incomplete as up to 30% of viral particles still carry uncleaved prM. Post-translationally, N-glycosylated. N-glycosylated. The excreted form is glycosylated and this is required for efficient secretion of the protein from infected cells. In terms of processing, acetylated by host KAT5. Acetylation modulates NS3 RNA-binding and unwinding activities and plays an important positive role for viral replication. Post-translationally, sumoylation of RNA-directed RNA polymerase NS5 increases NS5 protein stability allowing proper viral RNA replication. Phosphorylated on serines residues. This phosphorylation may trigger NS5 nuclear localization.

It is found in the virion. Its subcellular location is the host nucleus. It localises to the host cytoplasm. The protein localises to the host perinuclear region. The protein resides in the secreted. It is found in the virion membrane. Its subcellular location is the host endoplasmic reticulum membrane. It localises to the host mitochondrion. The enzyme catalyses Selective hydrolysis of -Xaa-Xaa-|-Yaa- bonds in which each of the Xaa can be either Arg or Lys and Yaa can be either Ser or Ala.. The catalysed reaction is RNA(n) + a ribonucleoside 5'-triphosphate = RNA(n+1) + diphosphate. It catalyses the reaction a ribonucleoside 5'-triphosphate + H2O = a ribonucleoside 5'-diphosphate + phosphate + H(+). It carries out the reaction ATP + H2O = ADP + phosphate + H(+). The enzyme catalyses a 5'-end (5'-triphosphoguanosine)-ribonucleoside in mRNA + S-adenosyl-L-methionine = a 5'-end (N(7)-methyl 5'-triphosphoguanosine)-ribonucleoside in mRNA + S-adenosyl-L-homocysteine. The catalysed reaction is a 5'-end (N(7)-methyl 5'-triphosphoguanosine)-ribonucleoside in mRNA + S-adenosyl-L-methionine = a 5'-end (N(7)-methyl 5'-triphosphoguanosine)-(2'-O-methyl-ribonucleoside) in mRNA + S-adenosyl-L-homocysteine + H(+). In terms of biological role, plays a role in virus budding by binding to the cell membrane and gathering the viral RNA into a nucleocapsid that forms the core of a mature virus particle. During virus entry, may induce genome penetration into the host cytoplasm after hemifusion induced by the surface proteins. Can migrate to the cell nucleus where it modulates host functions. Overcomes the anti-viral effects of host EXOC1 by sequestering and degrading the latter through the proteasome degradation pathway. Its function is as follows. Inhibits RNA silencing by interfering with host Dicer. Functionally, prevents premature fusion activity of envelope proteins in trans-Golgi by binding to envelope protein E at pH6.0. After virion release in extracellular space, gets dissociated from E dimers. Acts as a chaperone for envelope protein E during intracellular virion assembly by masking and inactivating envelope protein E fusion peptide. prM is the only viral peptide matured by host furin in the trans-Golgi network probably to avoid catastrophic activation of the viral fusion activity in acidic Golgi compartment prior to virion release. prM-E cleavage is inefficient, and many virions are only partially matured. These uncleaved prM would play a role in immune evasion. In terms of biological role, may play a role in virus budding. Exerts cytotoxic effects by activating a mitochondrial apoptotic pathway through M ectodomain. May display a viroporin activity. Its function is as follows. Binds to host cell surface receptor and mediates fusion between viral and cellular membranes. Envelope protein is synthesized in the endoplasmic reticulum in the form of heterodimer with protein prM. They play a role in virion budding in the ER, and the newly formed immature particle is covered with 60 spikes composed of heterodimer between precursor prM and envelope protein E. The virion is transported to the Golgi apparatus where the low pH causes dissociation of PrM-E heterodimers and formation of E homodimers. prM-E cleavage is inefficient, and many virions are only partially matured. These uncleaved prM would play a role in immune evasion. Functionally, involved in immune evasion, pathogenesis and viral replication. Once cleaved off the polyprotein, is targeted to three destinations: the viral replication cycle, the plasma membrane and the extracellular compartment. Essential for viral replication. Required for formation of the replication complex and recruitment of other non-structural proteins to the ER-derived membrane structures. Excreted as a hexameric lipoparticle that plays a role against host immune response. Antagonizing the complement function. Binds to the host macrophages and dendritic cells. Inhibits signal transduction originating from Toll-like receptor 3 (TLR3). Mediates complement activation, which may contribute to the pathogenesis of the vascular leakage that occurs in severe dengue disease. Activates autophagy through the AMPK/ERK/mTOR signaling pathway. Mechanistically, acts as the assembly platform for STK11-AMPK interactions and promotes STK11-AMPK interactions. In turn, promotes phosphorylation of the AMPK kinase structural domain and activates AMPK, thereby positively regulating the AMPK/ERK/mTOR signaling pathway and inducing autophagy. Disrupts the host endothelial glycocalyx layer of host pulmonary microvascular endothelial cells, inducing degradation of sialic acid and shedding of heparan sulfate proteoglycans. NS1 induces expression of sialidases, heparanase, and activates cathepsin L, which activates heparanase via enzymatic cleavage. These effects are probably linked to the endothelial hyperpermeability observed in severe dengue disease. In terms of biological role, component of the viral RNA replication complex that functions in virion assembly and antagonizes the host immune response. Its function is as follows. Required cofactor for the serine protease function of NS3. May have membrane-destabilizing activity and form viroporins. Functionally, displays three enzymatic activities: serine protease, NTPase and RNA helicase. NS3 serine protease, in association with NS2B, performs its autocleavage and cleaves the polyprotein at dibasic sites in the cytoplasm: C-prM, NS2A-NS2B, NS2B-NS3, NS3-NS4A, NS4A-2K and NS4B-NS5. NS3 RNA helicase binds RNA and unwinds dsRNA in the 3' to 5' direction. Regulates the ATPase activity of the NS3 helicase activity. NS4A allows NS3 helicase to conserve energy during unwinding. Plays a role in the inhibition of the host innate immune response. Interacts with host MAVS and thereby prevents the interaction between RIGI and MAVS. In turn, IFN-beta production is impaired. Interacts with host AUP1 which mediates induction of lipophagy in host cells and facilitates production of virus progeny particles. In terms of biological role, functions as a signal peptide for NS4B and is required for the interferon antagonism activity of the latter. Its function is as follows. Induces the formation of ER-derived membrane vesicles where the viral replication takes place. Inhibits interferon (IFN)-induced host STAT1 phosphorylation and nuclear translocation, thereby preventing the establishment of cellular antiviral state by blocking the IFN-alpha/beta pathway. Functionally, replicates the viral (+) and (-) RNA genome, and performs the capping of genomes in the cytoplasm. NS5 methylates viral RNA cap at guanine N-7 and ribose 2'-O positions. Besides its role in RNA genome replication, also prevents the establishment of cellular antiviral state by blocking the interferon-alpha/beta (IFN-alpha/beta) signaling pathway. Inhibits host TYK2 and STAT2 phosphorylation, thereby preventing activation of JAK-STAT signaling pathway. May reduce immune responses by preventing the recruitment of the host PAF1 complex to interferon-responsive genes. The sequence is that of Genome polyprotein from Dengue virus type 2 (strain 16681-PDK53) (DENV-2).